Reading from the N-terminus, the 1357-residue chain is DNA-directed RNA polymerase subunit beta (1357 aa).

This sequence belongs to the RNA polymerase beta chain family. As to quaternary structure, the RNAP catalytic core consists of 2 alpha, 1 beta, 1 beta' and 1 omega subunit. When a sigma factor is associated with the core the holoenzyme is formed, which can initiate transcription.

The enzyme catalyses RNA(n) + a ribonucleoside 5'-triphosphate = RNA(n+1) + diphosphate. Functionally, DNA-dependent RNA polymerase catalyzes the transcription of DNA into RNA using the four ribonucleoside triphosphates as substrates. The sequence is that of DNA-directed RNA polymerase subunit beta from Pseudomonas putida (strain W619).